The following is a 277-amino-acid chain: Large ribosomal subunit protein uL2 (277 aa).

Disordered regions lie at residues 34–55 and 213–277; these read LQPL…RHHG and WKGI…RKKK.

Belongs to the universal ribosomal protein uL2 family. In terms of assembly, part of the 50S ribosomal subunit. Forms a bridge to the 30S subunit in the 70S ribosome.

Functionally, one of the primary rRNA binding proteins. Required for association of the 30S and 50S subunits to form the 70S ribosome, for tRNA binding and peptide bond formation. It has been suggested to have peptidyltransferase activity; this is somewhat controversial. Makes several contacts with the 16S rRNA in the 70S ribosome. The polypeptide is Large ribosomal subunit protein uL2 (Staphylococcus haemolyticus (strain JCSC1435)).